Here is a 141-residue protein sequence, read N- to C-terminus: Nucleoside diphosphate kinase (141 aa).

ATP-binding residues include Lys-11, Phe-59, Arg-87, Thr-93, Arg-104, and Asn-114. The active-site Pros-phosphohistidine intermediate is His-117.

Belongs to the NDK family. In terms of assembly, homotetramer. It depends on Mg(2+) as a cofactor.

The protein resides in the cytoplasm. It catalyses the reaction a 2'-deoxyribonucleoside 5'-diphosphate + ATP = a 2'-deoxyribonucleoside 5'-triphosphate + ADP. It carries out the reaction a ribonucleoside 5'-diphosphate + ATP = a ribonucleoside 5'-triphosphate + ADP. Its function is as follows. Major role in the synthesis of nucleoside triphosphates other than ATP. The ATP gamma phosphate is transferred to the NDP beta phosphate via a ping-pong mechanism, using a phosphorylated active-site intermediate. In Histophilus somni (strain 2336) (Haemophilus somnus), this protein is Nucleoside diphosphate kinase.